We begin with the raw amino-acid sequence, 435 residues long: Methylenetetrahydrofolate--tRNA-(uracil-5-)-methyltransferase TrmFO (435 aa).

7-12 (GAGLAG) is an FAD binding site.

It belongs to the MnmG family. TrmFO subfamily. Requires FAD as cofactor.

The protein localises to the cytoplasm. It catalyses the reaction uridine(54) in tRNA + (6R)-5,10-methylene-5,6,7,8-tetrahydrofolate + NADH + H(+) = 5-methyluridine(54) in tRNA + (6S)-5,6,7,8-tetrahydrofolate + NAD(+). It carries out the reaction uridine(54) in tRNA + (6R)-5,10-methylene-5,6,7,8-tetrahydrofolate + NADPH + H(+) = 5-methyluridine(54) in tRNA + (6S)-5,6,7,8-tetrahydrofolate + NADP(+). Its function is as follows. Catalyzes the folate-dependent formation of 5-methyl-uridine at position 54 (M-5-U54) in all tRNAs. The sequence is that of Methylenetetrahydrofolate--tRNA-(uracil-5-)-methyltransferase TrmFO from Thermotoga neapolitana (strain ATCC 49049 / DSM 4359 / NBRC 107923 / NS-E).